Here is a 209-residue protein sequence, read N- to C-terminus: 8-oxoguanine DNA glycosylase/AP lyase (209 aa).

Catalysis depends on residues Lys-131 and Asp-149.

Belongs to the type-2 OGG1 family.

It catalyses the reaction 2'-deoxyribonucleotide-(2'-deoxyribose 5'-phosphate)-2'-deoxyribonucleotide-DNA = a 3'-end 2'-deoxyribonucleotide-(2,3-dehydro-2,3-deoxyribose 5'-phosphate)-DNA + a 5'-end 5'-phospho-2'-deoxyribonucleoside-DNA + H(+). Catalyzes the excision of an oxidatively damaged form of guanine (7,8-dihydro-8-oxoguanine = 8-oxoG) from DNA. Also cleaves the DNA backbone at apurinic/apyrimidinic sites (AP sites). The protein is 8-oxoguanine DNA glycosylase/AP lyase of Korarchaeum cryptofilum (strain OPF8).